Consider the following 288-residue polypeptide: Formamidopyrimidine-DNA glycosylase (288 aa).

The Schiff-base intermediate with DNA role is filled by Pro2. Glu3 (proton donor) is an active-site residue. Residue Lys58 is the Proton donor; for beta-elimination activity of the active site. The DNA site is built by His101, Arg124, and Arg169. The FPG-type zinc-finger motif lies at 254-288 (LVYDRAGLPCRVCGTPIRQIVQGQRSTFYCPACQR). Arg278 (proton donor; for delta-elimination activity) is an active-site residue.

Belongs to the FPG family. Monomer. The cofactor is Zn(2+).

The enzyme catalyses Hydrolysis of DNA containing ring-opened 7-methylguanine residues, releasing 2,6-diamino-4-hydroxy-5-(N-methyl)formamidopyrimidine.. It catalyses the reaction 2'-deoxyribonucleotide-(2'-deoxyribose 5'-phosphate)-2'-deoxyribonucleotide-DNA = a 3'-end 2'-deoxyribonucleotide-(2,3-dehydro-2,3-deoxyribose 5'-phosphate)-DNA + a 5'-end 5'-phospho-2'-deoxyribonucleoside-DNA + H(+). In terms of biological role, involved in base excision repair of DNA damaged by oxidation or by mutagenic agents. Acts as a DNA glycosylase that recognizes and removes damaged bases. Has a preference for oxidized purines, such as 7,8-dihydro-8-oxoguanine (8-oxoG). Has AP (apurinic/apyrimidinic) lyase activity and introduces nicks in the DNA strand. Cleaves the DNA backbone by beta-delta elimination to generate a single-strand break at the site of the removed base with both 3'- and 5'-phosphates. This Ralstonia nicotianae (strain ATCC BAA-1114 / GMI1000) (Ralstonia solanacearum) protein is Formamidopyrimidine-DNA glycosylase.